Consider the following 102-residue polypeptide: Small ribosomal subunit protein uS10 (102 aa).

This sequence belongs to the universal ribosomal protein uS10 family. Part of the 30S ribosomal subunit.

Involved in the binding of tRNA to the ribosomes. The chain is Small ribosomal subunit protein uS10 from Geotalea daltonii (strain DSM 22248 / JCM 15807 / FRC-32) (Geobacter daltonii).